Consider the following 44-residue polypeptide: Cytochrome b559 subunit beta (44 aa).

The helical transmembrane segment at 19–35 (WLAVHTLAVPTVFFVGA) threads the bilayer. Histidine 23 lines the heme pocket.

Belongs to the PsbE/PsbF family. As to quaternary structure, heterodimer of an alpha subunit and a beta subunit. PSII is composed of 1 copy each of membrane proteins PsbA, PsbB, PsbC, PsbD, PsbE, PsbF, PsbH, PsbI, PsbJ, PsbK, PsbL, PsbM, PsbT, PsbX, PsbY, PsbZ, Psb30/Ycf12, peripheral proteins PsbO, CyanoQ (PsbQ), PsbU, PsbV and a large number of cofactors. It forms dimeric complexes. Heme b serves as cofactor.

It localises to the cellular thylakoid membrane. Its function is as follows. This b-type cytochrome is tightly associated with the reaction center of photosystem II (PSII). PSII is a light-driven water:plastoquinone oxidoreductase that uses light energy to abstract electrons from H(2)O, generating O(2) and a proton gradient subsequently used for ATP formation. It consists of a core antenna complex that captures photons, and an electron transfer chain that converts photonic excitation into a charge separation. The protein is Cytochrome b559 subunit beta of Crocosphaera subtropica (strain ATCC 51142 / BH68) (Cyanothece sp. (strain ATCC 51142)).